The following is a 276-amino-acid chain: Ribosomal RNA small subunit methyltransferase A (276 aa).

Asparagine 19, leucine 21, glycine 46, glutamate 71, aspartate 94, and asparagine 117 together coordinate S-adenosyl-L-methionine.

Belongs to the class I-like SAM-binding methyltransferase superfamily. rRNA adenine N(6)-methyltransferase family. RsmA subfamily.

It is found in the cytoplasm. The catalysed reaction is adenosine(1518)/adenosine(1519) in 16S rRNA + 4 S-adenosyl-L-methionine = N(6)-dimethyladenosine(1518)/N(6)-dimethyladenosine(1519) in 16S rRNA + 4 S-adenosyl-L-homocysteine + 4 H(+). Specifically dimethylates two adjacent adenosines (A1518 and A1519) in the loop of a conserved hairpin near the 3'-end of 16S rRNA in the 30S particle. May play a critical role in biogenesis of 30S subunits. The chain is Ribosomal RNA small subunit methyltransferase A from Burkholderia ambifaria (strain ATCC BAA-244 / DSM 16087 / CCUG 44356 / LMG 19182 / AMMD) (Burkholderia cepacia (strain AMMD)).